The following is a 549-amino-acid chain: Oxygen-dependent choline dehydrogenase (549 aa).

4-33 is an FAD binding site; it reads DFVIIGSGSAGSALAYRLSEDGANSVVVLE. The active-site Proton acceptor is the His-465.

This sequence belongs to the GMC oxidoreductase family. FAD serves as cofactor.

It carries out the reaction choline + A = betaine aldehyde + AH2. It catalyses the reaction betaine aldehyde + NAD(+) + H2O = glycine betaine + NADH + 2 H(+). The protein operates within amine and polyamine biosynthesis; betaine biosynthesis via choline pathway; betaine aldehyde from choline (cytochrome c reductase route): step 1/1. Functionally, involved in the biosynthesis of the osmoprotectant glycine betaine. Catalyzes the oxidation of choline to betaine aldehyde and betaine aldehyde to glycine betaine at the same rate. This Sinorhizobium medicae (strain WSM419) (Ensifer medicae) protein is Oxygen-dependent choline dehydrogenase.